Reading from the N-terminus, the 435-residue chain is Serine hydroxymethyltransferase (435 aa).

(6S)-5,6,7,8-tetrahydrofolate is bound by residues Leu131 and 135-137 (GHL). Lys240 carries the post-translational modification N6-(pyridoxal phosphate)lysine.

This sequence belongs to the SHMT family. Homodimer. The cofactor is pyridoxal 5'-phosphate.

Its subcellular location is the cytoplasm. It carries out the reaction (6R)-5,10-methylene-5,6,7,8-tetrahydrofolate + glycine + H2O = (6S)-5,6,7,8-tetrahydrofolate + L-serine. Its pathway is one-carbon metabolism; tetrahydrofolate interconversion. The protein operates within amino-acid biosynthesis; glycine biosynthesis; glycine from L-serine: step 1/1. Catalyzes the reversible interconversion of serine and glycine with tetrahydrofolate (THF) serving as the one-carbon carrier. This reaction serves as the major source of one-carbon groups required for the biosynthesis of purines, thymidylate, methionine, and other important biomolecules. Also exhibits THF-independent aldolase activity toward beta-hydroxyamino acids, producing glycine and aldehydes, via a retro-aldol mechanism. The polypeptide is Serine hydroxymethyltransferase (Bifidobacterium longum subsp. infantis (strain ATCC 15697 / DSM 20088 / JCM 1222 / NCTC 11817 / S12)).